A 54-amino-acid polypeptide reads, in one-letter code: UPF0181 protein APJL_0874 (54 aa).

This sequence belongs to the UPF0181 family.

This is UPF0181 protein APJL_0874 from Actinobacillus pleuropneumoniae serotype 3 (strain JL03).